The sequence spans 192 residues: Ion-translocating oxidoreductase complex subunit A (192 aa).

The next 6 membrane-spanning stretches (helical) occupy residues 5–25, 39–59, 65–85, 102–122, 134–154, and 171–191; these read LLLLISTVLVNNFVLVKFLGL, IGMSMATTFVLTLASVLSYLV, LPFELGYLRTMSFILVIAVVV, ALGIYLPLITTNCAVLGVALL, AIYGFGAAVGFSLVLILFSAM, and AIAMITAGLMSLAFMGFTGLV.

The protein belongs to the NqrDE/RnfAE family. The complex is composed of six subunits: RnfA, RnfB, RnfC, RnfD, RnfE and RnfG.

It localises to the cell inner membrane. In terms of biological role, part of a membrane-bound complex that couples electron transfer with translocation of ions across the membrane. The polypeptide is Ion-translocating oxidoreductase complex subunit A (Shewanella sediminis (strain HAW-EB3)).